Here is a 684-residue protein sequence, read N- to C-terminus: DNA ligase (684 aa).

NAD(+) is bound by residues 46–50 (DYVYD), 100–101 (SL), and Glu130. Lys132 (N6-AMP-lysine intermediate) is an active-site residue. NAD(+) contacts are provided by Arg153, Glu187, Lys303, and Lys327. Zn(2+) is bound by residues Cys421, Cys424, Cys439, and Cys444. In terms of domain architecture, BRCT spans 604–684 (DEKNYFFNKR…DFINLSNAKK (81 aa)).

It belongs to the NAD-dependent DNA ligase family. LigA subfamily. The cofactor is Mg(2+). Mn(2+) is required as a cofactor.

The catalysed reaction is NAD(+) + (deoxyribonucleotide)n-3'-hydroxyl + 5'-phospho-(deoxyribonucleotide)m = (deoxyribonucleotide)n+m + AMP + beta-nicotinamide D-nucleotide.. Its function is as follows. DNA ligase that catalyzes the formation of phosphodiester linkages between 5'-phosphoryl and 3'-hydroxyl groups in double-stranded DNA using NAD as a coenzyme and as the energy source for the reaction. It is essential for DNA replication and repair of damaged DNA. The sequence is that of DNA ligase from Oenococcus oeni (strain ATCC BAA-331 / PSU-1).